The sequence spans 431 residues: Glucose-1-phosphate adenylyltransferase (431 aa).

A beta-D-fructose 1,6-bisphosphate-binding site is contributed by K39. The AMP site is built by R40, H46, and R52. Y114 is a binding site for alpha-D-glucose 1-phosphate. Position 130 (R130) interacts with AMP. Residues G179, 194–195 (EK), and S212 contribute to the alpha-D-glucose 1-phosphate site. Residues E370 and R386 each contribute to the AMP site. Beta-D-fructose 1,6-bisphosphate-binding positions include 419–423 (REMLR) and 429–431 (QER).

This sequence belongs to the bacterial/plant glucose-1-phosphate adenylyltransferase family. In terms of assembly, homotetramer.

The catalysed reaction is alpha-D-glucose 1-phosphate + ATP + H(+) = ADP-alpha-D-glucose + diphosphate. Its pathway is glycan biosynthesis; glycogen biosynthesis. Allosterically activated by fructose-1,6-bisphosphate (F16BP) and inhibited by AMP. In terms of biological role, involved in the biosynthesis of ADP-glucose, a building block required for the elongation reactions to produce glycogen. Catalyzes the reaction between ATP and alpha-D-glucose 1-phosphate (G1P) to produce pyrophosphate and ADP-Glc. The protein is Glucose-1-phosphate adenylyltransferase of Escherichia fergusonii (strain ATCC 35469 / DSM 13698 / CCUG 18766 / IAM 14443 / JCM 21226 / LMG 7866 / NBRC 102419 / NCTC 12128 / CDC 0568-73).